A 360-amino-acid chain; its full sequence is Phosphate acyltransferase (360 aa).

Belongs to the PlsX family. In terms of assembly, homodimer. Probably interacts with PlsY.

The protein resides in the cytoplasm. It catalyses the reaction a fatty acyl-[ACP] + phosphate = an acyl phosphate + holo-[ACP]. It functions in the pathway lipid metabolism; phospholipid metabolism. In terms of biological role, catalyzes the reversible formation of acyl-phosphate (acyl-PO(4)) from acyl-[acyl-carrier-protein] (acyl-ACP). This enzyme utilizes acyl-ACP as fatty acyl donor, but not acyl-CoA. This Janthinobacterium sp. (strain Marseille) (Minibacterium massiliensis) protein is Phosphate acyltransferase.